A 463-amino-acid chain; its full sequence is Kynureninase 2 (463 aa).

Pyridoxal 5'-phosphate contacts are provided by residues Leu-134, Thr-135, 162-165 (FPSD), Asp-247, His-250, and Tyr-272. The residue at position 273 (Lys-273) is an N6-(pyridoxal phosphate)lysine. Pyridoxal 5'-phosphate is bound by residues Trp-312 and Asn-340.

The protein belongs to the kynureninase family. Homodimer. The cofactor is pyridoxal 5'-phosphate.

The protein localises to the cytoplasm. It carries out the reaction L-kynurenine + H2O = anthranilate + L-alanine + H(+). It catalyses the reaction 3-hydroxy-L-kynurenine + H2O = 3-hydroxyanthranilate + L-alanine + H(+). Its pathway is amino-acid degradation; L-kynurenine degradation; L-alanine and anthranilate from L-kynurenine: step 1/1. The protein operates within cofactor biosynthesis; NAD(+) biosynthesis; quinolinate from L-kynurenine: step 2/3. Its function is as follows. Catalyzes the cleavage of L-kynurenine (L-Kyn) and L-3-hydroxykynurenine (L-3OHKyn) into anthranilic acid (AA) and 3-hydroxyanthranilic acid (3-OHAA), respectively. The sequence is that of Kynureninase 2 (bna5-2) from Aspergillus niger (strain ATCC MYA-4892 / CBS 513.88 / FGSC A1513).